Here is a 402-residue protein sequence, read N- to C-terminus: Tryptophan synthase beta chain (402 aa).

Residue K91 is modified to N6-(pyridoxal phosphate)lysine.

Belongs to the TrpB family. In terms of assembly, tetramer of two alpha and two beta chains. Requires pyridoxal 5'-phosphate as cofactor.

The enzyme catalyses (1S,2R)-1-C-(indol-3-yl)glycerol 3-phosphate + L-serine = D-glyceraldehyde 3-phosphate + L-tryptophan + H2O. It participates in amino-acid biosynthesis; L-tryptophan biosynthesis; L-tryptophan from chorismate: step 5/5. The beta subunit is responsible for the synthesis of L-tryptophan from indole and L-serine. This is Tryptophan synthase beta chain (trpB) from Lactococcus lactis subsp. lactis (strain IL1403) (Streptococcus lactis).